The chain runs to 612 residues: Putative zinc metalloproteinase C607.06c (612 aa).

Residue His303 participates in Zn(2+) binding. Glu304 is an active-site residue. Zn(2+) is bound by residues His307 and His313. One can recognise a Jacalin-type lectin domain in the interval 477–612 (VYRSERYGLR…FMDSIGFFIK (136 aa)).

It belongs to the peptidase M10B family. Zn(2+) serves as cofactor.

The protein is Putative zinc metalloproteinase C607.06c of Schizosaccharomyces pombe (strain 972 / ATCC 24843) (Fission yeast).